The chain runs to 143 residues: 18.1 kDa class I heat shock protein (143 aa).

A sHSP domain is found at 29–143; sequence ENSAFVSTRI…PEVKSIEISS (115 aa).

This sequence belongs to the small heat shock protein (HSP20) family. As to quaternary structure, forms oligomeric structures.

It localises to the cytoplasm. This Medicago sativa (Alfalfa) protein is 18.1 kDa class I heat shock protein (HSP18.1).